The following is a 109-amino-acid chain: uncharacterized protein (109 aa).

Residues 75 to 95 form a helical membrane-spanning segment; the sequence is MALFHTVFILWPHFCGILWTV.

The protein resides in the membrane. This is an uncharacterized protein from Saccharomyces cerevisiae (strain ATCC 204508 / S288c) (Baker's yeast).